Reading from the N-terminus, the 59-residue chain is Large ribosomal subunit protein bL32 (59 aa).

A compositionally biased stretch (basic residues) spans 1-16 (MAVPKRKTSPSKRGMR). The tract at residues 1–59 (MAVPKRKTSPSKRGMRRSADALKAPTYVEDKNSGELRRPHHIDLKSGMYRGRQVLEAKE) is disordered. The span at 28–44 (VEDKNSGELRRPHHIDL) shows a compositional bias: basic and acidic residues.

It belongs to the bacterial ribosomal protein bL32 family.

The protein is Large ribosomal subunit protein bL32 of Brucella anthropi (strain ATCC 49188 / DSM 6882 / CCUG 24695 / JCM 21032 / LMG 3331 / NBRC 15819 / NCTC 12168 / Alc 37) (Ochrobactrum anthropi).